Consider the following 491-residue polypeptide: Anthranilate synthase component 1 (491 aa).

L-tryptophan is bound by residues serine 49 and 271-273; that span reads PYL. 306–307 is a binding site for chorismate; that stretch reads GT. Mg(2+) is bound at residue glutamate 333. Chorismate-binding positions include tyrosine 421, arginine 441, 455 to 457, and glycine 457; that span reads GAG. Glutamate 470 lines the Mg(2+) pocket.

It belongs to the anthranilate synthase component I family. In terms of assembly, heterotetramer consisting of two non-identical subunits: a beta subunit (TrpG) and a large alpha subunit (TrpE). The cofactor is Mg(2+).

The enzyme catalyses chorismate + L-glutamine = anthranilate + pyruvate + L-glutamate + H(+). Its pathway is amino-acid biosynthesis; L-tryptophan biosynthesis; L-tryptophan from chorismate: step 1/5. With respect to regulation, feedback inhibited by tryptophan. In terms of biological role, part of a heterotetrameric complex that catalyzes the two-step biosynthesis of anthranilate, an intermediate in the biosynthesis of L-tryptophan. In the first step, the glutamine-binding beta subunit (TrpG) of anthranilate synthase (AS) provides the glutamine amidotransferase activity which generates ammonia as a substrate that, along with chorismate, is used in the second step, catalyzed by the large alpha subunit of AS (TrpE) to produce anthranilate. In the absence of TrpG, TrpE can synthesize anthranilate directly from chorismate and high concentrations of ammonia. This chain is Anthranilate synthase component 1 (trpE), found in Neisseria meningitidis serogroup A / serotype 4A (strain DSM 15465 / Z2491).